Here is a 157-residue protein sequence, read N- to C-terminus: uncharacterized protein (157 aa).

Residues 9 to 146 (LLINYKTLDE…GDFYVWHPET (138 aa)) enclose the N-acetyltransferase domain.

This is an uncharacterized protein from Bacillus cereus (strain AH187).